Consider the following 85-residue polypeptide: Large ribosomal subunit protein bL27 (85 aa).

Belongs to the bacterial ribosomal protein bL27 family.

The polypeptide is Large ribosomal subunit protein bL27 (Stutzerimonas stutzeri (strain A1501) (Pseudomonas stutzeri)).